The sequence spans 345 residues: Protein GAMETE CELL DEFECTIVE 1, mitochondrial (345 aa).

The N-terminal 43 residues, 1-43, are a transit peptide targeting the mitochondrion; the sequence is MLALRKTLLHGRLPAAPPAAAAAAIASRIPALLRRLSSSPGDG. Residues 36 to 82 are disordered; it reads LSSSPGDGQGGDEWGSSWSTGITKEHFDGSDAAVGRPVTSPSKPVSP.

Its subcellular location is the mitochondrion. Functionally, essential for fertility (male and female gametophyte functions and development). Required for the integrity of female gametic mitochondria. Involved in embryo apical-basal patterning, and particularly dorsal-ventral patterning, during early embryogenesis, and endosperm free nucleus positioning and development as well as early endosperm development, probably by modulating the expression pattern of related genes (e.g. AL1, MYB3/AL2, CYP78A13/GE, PNH1, HAZ1, MPK6 and OSH1). Has function in triggering of endosperm programmed cell death (PCD) leading to syncytial endosperm cellularization and starchy endosperm cell maturation. Implicated in central vacuole dynamics necessary for microspore development leading to pollen production, and for pollen development and germination. This Oryza sativa subsp. indica (Rice) protein is Protein GAMETE CELL DEFECTIVE 1, mitochondrial.